Consider the following 349-residue polypeptide: DNA repair protein XRCC3 (349 aa).

Position 1 is an N-acetylmethionine (M1). 107–114 is a binding site for ATP; sequence GCSSAGKT.

Belongs to the RecA family. RAD51 subfamily. Interacts with RAD51C and RAD51. Part of the CX3 complex consisting of RAD51C and XRCC3; the complex has a ring-like structure arranged into a flat disc around a central channel; CX3 can interact with RAD51 in vitro. Forms a complex with FANCD2, BRCA2 and phosphorylated FANCG. Interacts with SWSAP1 and ZSWIM7; involved in homologous recombination repair. Interacts directly with PALB2 which may serve as a scaffold for a HR complex containing PALB2, BRCA2, RAD51C, RAD51 and XRCC3.

It localises to the nucleus. The protein resides in the cytoplasm. The protein localises to the perinuclear region. Its subcellular location is the mitochondrion matrix. Its function is as follows. Involved in the homologous recombination repair (HRR) pathway of double-stranded DNA, thought to repair chromosomal fragmentation, translocations and deletions. Part of the RAD21 paralog protein complex CX3 which acts in the BRCA1-BRCA2-dependent HR pathway. Upon DNA damage, CX3 acts downstream of RAD51 recruitment; the complex binds predominantly to the intersection of the four duplex arms of the Holliday junction (HJ) and to junctions of replication forks. Involved in HJ resolution and thus in processing HR intermediates late in the DNA repair process; the function may be linked to the CX3 complex and seems to involve GEN1 during mitotic cell cycle progression. Part of a PALB2-scaffolded HR complex containing BRCA2 and RAD51C and which is thought to play a role in DNA repair by HR. Plays a role in regulating mitochondrial DNA copy number under conditions of oxidative stress in the presence of RAD51 and RAD51C. The polypeptide is DNA repair protein XRCC3 (Xrcc3) (Mus musculus (Mouse)).